The primary structure comprises 758 residues: 5-methyltetrahydropteroyltriglutamate--homocysteine methyltransferase (758 aa).

5-methyltetrahydropteroyltri-L-glutamate-binding positions include 16–19 (RELK) and lysine 116. Residues 436–438 (IGS) and glutamate 489 contribute to the L-homocysteine site. L-methionine-binding positions include 436–438 (IGS) and glutamate 489. 5-methyltetrahydropteroyltri-L-glutamate-binding positions include 520–521 (RC) and tryptophan 566. Residue aspartate 604 participates in L-homocysteine binding. Aspartate 604 provides a ligand contact to L-methionine. Glutamate 610 serves as a coordination point for 5-methyltetrahydropteroyltri-L-glutamate. Histidine 646, cysteine 648, and glutamate 670 together coordinate Zn(2+). The Proton donor role is filled by histidine 699. Position 731 (cysteine 731) interacts with Zn(2+).

This sequence belongs to the vitamin-B12 independent methionine synthase family. Zn(2+) serves as cofactor.

The enzyme catalyses 5-methyltetrahydropteroyltri-L-glutamate + L-homocysteine = tetrahydropteroyltri-L-glutamate + L-methionine. It functions in the pathway amino-acid biosynthesis; L-methionine biosynthesis via de novo pathway; L-methionine from L-homocysteine (MetE route): step 1/1. Functionally, catalyzes the transfer of a methyl group from 5-methyltetrahydrofolate to homocysteine resulting in methionine formation. The sequence is that of 5-methyltetrahydropteroyltriglutamate--homocysteine methyltransferase from Xylella fastidiosa (strain 9a5c).